A 238-amino-acid polypeptide reads, in one-letter code: Probable transcriptional regulatory protein SAK_1658 (238 aa).

It belongs to the TACO1 family. YeeN subfamily.

It is found in the cytoplasm. This Streptococcus agalactiae serotype Ia (strain ATCC 27591 / A909 / CDC SS700) protein is Probable transcriptional regulatory protein SAK_1658.